The primary structure comprises 234 residues: LRP chaperone MESD (234 aa).

A signal peptide spans 1–33; it reads MAASRWARKAVVLLCASDLLLLLLLLPPPGSCA. Residues 1–164 form a chaperone domain region; sequence MAASRWARKA…DRAIFMLRDG (164 aa). Disordered stretches follow at residues 31–95 and 187–234; these read SCAA…DFSK and GQVY…REDL. The segment covering 54–70 has biased composition (basic and acidic residues); it reads DIRDYNDADMARLLEQW. Over residues 71 to 80 the composition is skewed to acidic residues; it reads EKDDDIEEGD. The segment at 165–204 is escort domain; it reads SYAWEIKDFLVGQDRCADVTLEGQVYPGKGGGSKEKNKTK. Over residues 196-234 the composition is skewed to basic and acidic residues; that stretch reads GSKEKNKTKQDKGKKKKEGDLKSRSSKEENRAGNKREDL. A glycan (N-linked (GlcNAc...) asparagine) is linked at N201. Positions 231–234 match the Prevents secretion from ER motif; the sequence is REDL.

It belongs to the MESD family. As to quaternary structure, monomer. Interacts with LRP5; the interaction prevents LRP5 from forming aggregates and chaperones LRP6 to the plasma membrane. Interacts with LRP6; the interaction prevents LRP6 from forming aggregates and chaperones LRP6 to the plasma membrane. Interacts with LRP4; the interaction promotes glycosylation of LRP4 and its cell-surface expression.

The protein localises to the endoplasmic reticulum. Its function is as follows. Chaperone specifically assisting the folding of beta-propeller/EGF modules within the family of low-density lipoprotein receptors (LDLRs). Acts as a modulator of the Wnt pathway through chaperoning the coreceptors of the canonical Wnt pathway, LRP5 and LRP6, to the plasma membrane. Essential for specification of embryonic polarity and mesoderm induction. Plays an essential role in neuromuscular junction (NMJ) formation by promoting cell-surface expression of LRP4. May regulate phagocytosis of apoptotic retinal pigment epithelium (RPE) cells. This is LRP chaperone MESD from Homo sapiens (Human).